The chain runs to 386 residues: MATTKSFLILIVMILATTSSTFASLEEMVTVLSIDGGGIKGIIPGTILEFLEGQLQKMDNNADARLADYFDVIGGTSTGGLLTAMITTPNENNRPFAAANEIVPFYFEHGPHIFNSSTGQFFRKYDGKYLMQVLQEKLGETRVHQALTEVAISSFDIKTNKPVIFTKSNLAKSPELDAKMYDICYSTAAAPTYFPPHYFATNTINGDKYELNLVDGAVATVADPALLSVSVATRRAQEDPAFASIRSLNYKKMLLLSLGTGTTSEFDKTHTAEETAKWGALQWMLVIQQMTEAASSYMTDYYLSTVFQDLHSQNNYLRVQENPLTGTTTKADDASEANMELLAQVGENLLKKPVSKDNPETYEEALKRFAKLLSDRKKLRANKASY.

Residues 1-23 form the signal peptide; the sequence is MATTKSFLILIVMILATTSSTFA. The region spanning 32–229 is the PNPLA domain; it reads LSIDGGGIKG…TVADPALLSV (198 aa). The GXGXXG motif lies at 36–41; the sequence is GGGIKG. Positions 75–79 match the GXSXG motif; that stretch reads GTSTG. The active-site Nucleophile is S77. N115 carries an N-linked (GlcNAc...) asparagine glycan. The active-site Proton acceptor is the D215. Positions 215–217 match the DGA/G motif; that stretch reads DGA. Residues 360–384 adopt a coiled-coil conformation; it reads ETYEEALKRFAKLLSDRKKLRANKA.

The protein belongs to the patatin family.

It is found in the vacuole. In terms of biological role, probable lipolytic acyl hydrolase (LAH), an activity which is thought to be involved in the response of tubers to pathogens. This Solanum tuberosum (Potato) protein is Patatin-16.